The chain runs to 441 residues: Homoserine dehydrogenase (441 aa).

2 residues coordinate NADP(+): Asn-17 and Val-18. NAD(+) contacts are provided by Val-18 and Gly-47. Val-18 is a binding site for NADPH. Arg-49, Arg-50, and Lys-107 together coordinate NADP(+). Arg-49 is an NADPH binding site. Lys-107 contacts NADPH. The Na(+) site is built by Glu-131, Val-134, Gly-136, and Ile-138. NADP(+) is bound by residues Gly-189 and Glu-192. L-homoserine is bound by residues Glu-192 and Asp-203. The active-site Proton donor is the Lys-207. An NADP(+)-binding site is contributed by Gly-309. Gly-309 is a binding site for NAD(+). Gly-309 lines the NADPH pocket. The ACT domain maps to 356 to 435; that stretch reads YVSMNVADKP…VVQGVTSVLR (80 aa).

The protein belongs to the homoserine dehydrogenase family. A metal cation is required as a cofactor.

The catalysed reaction is L-homoserine + NADP(+) = L-aspartate 4-semialdehyde + NADPH + H(+). The enzyme catalyses L-homoserine + NAD(+) = L-aspartate 4-semialdehyde + NADH + H(+). It participates in amino-acid biosynthesis; L-methionine biosynthesis via de novo pathway; L-homoserine from L-aspartate: step 3/3. It functions in the pathway amino-acid biosynthesis; L-threonine biosynthesis; L-threonine from L-aspartate: step 3/5. In terms of biological role, catalyzes the conversion of L-aspartate-beta-semialdehyde (L-Asa) to L-homoserine (L-Hse), the third step in the biosynthesis of threonine and methionine from aspartate. This Mycobacterium leprae (strain TN) protein is Homoserine dehydrogenase (hom).